The primary structure comprises 150 residues: MERTFLAIKPDGVQRGLVGTIIQRFEQKGYTLVGLKLMRVSRELAEQHYGEHKDKPFFPGLVNFITSGPVVAMVWEGRGVIANARKLIGATNPLNAEPGTLRGDFAVDVGRNVIHGSDSPENAEREINLWFQTQELVPWEPALTSWVYEM.

Lys9, Phe57, Arg85, Thr91, Arg102, and Asn112 together coordinate ATP. His115 acts as the Pros-phosphohistidine intermediate in catalysis.

It belongs to the NDK family. In terms of assembly, homotetramer. The cofactor is Mg(2+).

It localises to the cytoplasm. The enzyme catalyses a 2'-deoxyribonucleoside 5'-diphosphate + ATP = a 2'-deoxyribonucleoside 5'-triphosphate + ADP. It catalyses the reaction a ribonucleoside 5'-diphosphate + ATP = a ribonucleoside 5'-triphosphate + ADP. Major role in the synthesis of nucleoside triphosphates other than ATP. The ATP gamma phosphate is transferred to the NDP beta phosphate via a ping-pong mechanism, using a phosphorylated active-site intermediate. The sequence is that of Nucleoside diphosphate kinase from Thermosynechococcus vestitus (strain NIES-2133 / IAM M-273 / BP-1).